The sequence spans 208 residues: Large ribosomal subunit protein uL4 (208 aa).

A disordered region spans residues Q44–N79.

The protein belongs to the universal ribosomal protein uL4 family. Part of the 50S ribosomal subunit.

In terms of biological role, one of the primary rRNA binding proteins, this protein initially binds near the 5'-end of the 23S rRNA. It is important during the early stages of 50S assembly. It makes multiple contacts with different domains of the 23S rRNA in the assembled 50S subunit and ribosome. Its function is as follows. Forms part of the polypeptide exit tunnel. The sequence is that of Large ribosomal subunit protein uL4 from Phocaeicola vulgatus (strain ATCC 8482 / DSM 1447 / JCM 5826 / CCUG 4940 / NBRC 14291 / NCTC 11154) (Bacteroides vulgatus).